The chain runs to 138 residues: Class I hydrophobin 3 (138 aa).

Residues 1 to 16 form the signal peptide; sequence MRFFLAITALVAAVTA. Intrachain disulfides connect Cys40-Cys111, Cys48-Cys105, Cys49-Cys87, and Cys112-Cys130.

This sequence belongs to the fungal hydrophobin family. Self-assembles to form functional amyloid fibrils called rodlets. Self-assembly into fibrillar rodlets occurs spontaneously at hydrophobic:hydrophilic interfaces and the rodlets further associate laterally to form amphipathic monolayers.

The protein resides in the secreted. Its subcellular location is the cell wall. Functionally, aerial growth, conidiation, and dispersal of filamentous fungi in the environment rely upon a capability of their secreting small amphipathic proteins called hydrophobins (HPBs) with low sequence identity. Class I can self-assemble into an outermost layer of rodlet bundles on aerial cell surfaces, conferring cellular hydrophobicity that supports fungal growth, development and dispersal; whereas Class II form highly ordered films at water-air interfaces through intermolecular interactions but contribute nothing to the rodlet structure. HYD3 is a class I hydrophobin that contributes to the formation of aerial hyphae and fruiting bodies. The protein is Class I hydrophobin 3 of Cordyceps militaris (Caterpillar fungus).